A 129-amino-acid chain; its full sequence is Large ribosomal subunit protein uL22 (129 aa).

This sequence belongs to the universal ribosomal protein uL22 family. As to quaternary structure, part of the 50S ribosomal subunit.

This protein binds specifically to 23S rRNA; its binding is stimulated by other ribosomal proteins, e.g. L4, L17, and L20. It is important during the early stages of 50S assembly. It makes multiple contacts with different domains of the 23S rRNA in the assembled 50S subunit and ribosome. Functionally, the globular domain of the protein is located near the polypeptide exit tunnel on the outside of the subunit, while an extended beta-hairpin is found that lines the wall of the exit tunnel in the center of the 70S ribosome. The chain is Large ribosomal subunit protein uL22 from Prochlorococcus marinus (strain MIT 9211).